The following is a 173-amino-acid chain: MSTEPVVFMDIAIDGRLLGRIKIRLFSSIVPKTAENFRQFCTGETLGVNQKPIGYKNSTFHRIIQGFMIQGGDFVSGDGTGSATIFNSRTFPDENFTLKHDRPGLLSMANAGKDSNGCQFFITTVPCDFLDGKHVVFGEVIEGYDIVKEIESTPVGANSRPKSNVAIVECGEM.

Residues 8–172 (FMDIAIDGRL…SNVAIVECGE (165 aa)) enclose the PPIase cyclophilin-type domain.

It belongs to the cyclophilin-type PPIase family. PPIase H subfamily.

It localises to the cytoplasm. The protein resides in the cytoskeleton. Its subcellular location is the microtubule organizing center. The protein localises to the spindle pole body. The enzyme catalyses [protein]-peptidylproline (omega=180) = [protein]-peptidylproline (omega=0). Its function is as follows. PPIases accelerate the folding of proteins. It catalyzes the cis-trans isomerization of proline imidic peptide bonds in oligopeptides. The polypeptide is Peptidyl-prolyl cis-trans isomerase cyp3 (cyp3) (Schizosaccharomyces pombe (strain 972 / ATCC 24843) (Fission yeast)).